The primary structure comprises 74 residues: UPF0352 protein MS1910 (74 aa).

Belongs to the UPF0352 family.

In Mannheimia succiniciproducens (strain KCTC 0769BP / MBEL55E), this protein is UPF0352 protein MS1910.